A 274-amino-acid chain; its full sequence is Phosphate import ATP-binding protein PstB (274 aa).

Positions 1–11 (MSEISIATSVP) are enriched in polar residues. The disordered stretch occupies residues 1-21 (MSEISIATSVPSGPGPLIGNQ). The ABC transporter domain occupies 28-269 (VIVRDLNFYY…PNDRRTQDYI (242 aa)). ATP is bound at residue 60-67 (GPSGCGKS).

This sequence belongs to the ABC transporter superfamily. Phosphate importer (TC 3.A.1.7) family. In terms of assembly, the complex is composed of two ATP-binding proteins (PstB), two transmembrane proteins (PstC and PstA) and a solute-binding protein (PstS).

The protein resides in the cell inner membrane. The enzyme catalyses phosphate(out) + ATP + H2O = ADP + 2 phosphate(in) + H(+). In terms of biological role, part of the ABC transporter complex PstSACB involved in phosphate import. Responsible for energy coupling to the transport system. The protein is Phosphate import ATP-binding protein PstB of Rhodopseudomonas palustris (strain BisB5).